A 216-amino-acid polypeptide reads, in one-letter code: Hexitol phosphatase A (216 aa).

Residue aspartate 9 is the Nucleophile of the active site. 2 residues coordinate a divalent metal cation: aspartate 9 and aspartate 11. Residues 9–11, 106–107, and lysine 138 each bind substrate; these read DLD and TS. The active-site Proton donor is the aspartate 11. Aspartate 163 serves as a coordination point for a divalent metal cation.

The protein belongs to the HAD-like hydrolase superfamily. CbbY/CbbZ/Gph/YieH family. Mg(2+) is required as a cofactor. Requires Mn(2+) as cofactor. The cofactor is Co(2+).

It carries out the reaction sugar phosphate + H2O = sugar + phosphate.. It catalyses the reaction D-mannitol 1-phosphate + H2O = D-mannitol + phosphate. The catalysed reaction is D-sorbitol 6-phosphate + H2O = D-sorbitol + phosphate. Its function is as follows. Sugar-phosphate phosphohydrolase that appears to contribute to butanol tolerance. Catalyzes the dephosphorylation of D-mannitol 1-phosphate and D-sorbitol 6-phosphate. Is also able to dephosphorylate other sugar phosphates in vitro including ribose-5-phosphate (Rib5P), 2-deoxyribose-5-phosphate, fructose-1-phosphate (Fru1P), fructose-6-phosphate (Fru6P), and glucose-6-phosphate (Glu6P). Selectively hydrolyzes beta-D-glucose-1-phosphate (bGlu1P) and has no activity with the alpha form. The sequence is that of Hexitol phosphatase A from Escherichia coli (strain K12).